The primary structure comprises 209 residues: Isopentenyl-diphosphate Delta-isomerase (209 aa).

Mn(2+) contacts are provided by His31 and His38. The Nudix hydrolase domain maps to 36-171; sequence PLHLAFSVYI…RLLVSPWCRA (136 aa). Residue Cys73 is part of the active site. Residue Cys73 coordinates Mg(2+). A Mn(2+)-binding site is contributed by His75. Position 93 (Glu93) interacts with Mg(2+). Mn(2+) is bound by residues Glu120 and Glu122. Glu122 is a catalytic residue.

Belongs to the IPP isomerase type 1 family. Mg(2+) is required as a cofactor. The cofactor is Mn(2+).

It is found in the cytoplasm. It catalyses the reaction isopentenyl diphosphate = dimethylallyl diphosphate. Its pathway is isoprenoid biosynthesis; dimethylallyl diphosphate biosynthesis; dimethylallyl diphosphate from isopentenyl diphosphate: step 1/1. In terms of biological role, catalyzes the 1,3-allylic rearrangement of the homoallylic substrate isopentenyl (IPP) to its highly electrophilic allylic isomer, dimethylallyl diphosphate (DMAPP). This chain is Isopentenyl-diphosphate Delta-isomerase, found in Rhizobium rhizogenes (Agrobacterium rhizogenes).